Consider the following 526-residue polypeptide: Peptide chain release factor 3 (526 aa).

A tr-type G domain is found at aspartate 9–glutamine 277. Residues serine 18–threonine 25, aspartate 86–histidine 90, and asparagine 140–aspartate 143 each bind GTP.

It belongs to the TRAFAC class translation factor GTPase superfamily. Classic translation factor GTPase family. PrfC subfamily.

The protein resides in the cytoplasm. Functionally, increases the formation of ribosomal termination complexes and stimulates activities of RF-1 and RF-2. It binds guanine nucleotides and has strong preference for UGA stop codons. It may interact directly with the ribosome. The stimulation of RF-1 and RF-2 is significantly reduced by GTP and GDP, but not by GMP. The polypeptide is Peptide chain release factor 3 (Shewanella loihica (strain ATCC BAA-1088 / PV-4)).